Reading from the N-terminus, the 161-residue chain is Globin CTT-VIIB-4 (161 aa).

An N-terminal signal peptide occupies residues 1-16; sequence MKFFAVLALCIVGAIA. The region spanning 18-161 is the Globin domain; sequence PLTADEASLV…NTMAVAVAHL (144 aa). Heme b contacts are provided by His-76 and His-111.

Belongs to the globin family. As to quaternary structure, homodimer.

The sequence is that of Globin CTT-VIIB-4 (CTT-7B4) from Chironomus thummi thummi (Midge).